A 287-amino-acid chain; its full sequence is Transcription cofactor vestigial-like protein 4 (287 aa).

2 disordered regions span residues 44–68 and 251–287; these read ASAL…SMEP and AAKD…SVVS. Ser58 and Ser271 each carry phosphoserine. The segment covering 275–287 has biased composition (low complexity); it reads HMVSHSHSPSVVS.

It belongs to the vestigial family. In terms of assembly, interacts with TEFs. Interacts with IRF2BP2.

Its subcellular location is the nucleus. Its function is as follows. May act as a specific coactivator for the mammalian TEFs. The polypeptide is Transcription cofactor vestigial-like protein 4 (Vgll4) (Mus musculus (Mouse)).